Here is a 151-residue protein sequence, read N- to C-terminus: MTNSPSSPVVLTNEEIMGLLPHRYPFALVDRVVEYEPGKSATGIKNVTINEPHFQGHFPGRPLMPGVLIVEAMAQVGGLIVKQIPDLPKGLFVFAGIDSVRFRRPVVPGDQLLINCELISIKRQRFGKVKGEAKVDGNLVCSGELMFSLVD.

Residue histidine 57 is part of the active site.

Belongs to the thioester dehydratase family. FabZ subfamily.

It localises to the cytoplasm. The enzyme catalyses a (3R)-hydroxyacyl-[ACP] = a (2E)-enoyl-[ACP] + H2O. In terms of biological role, involved in unsaturated fatty acids biosynthesis. Catalyzes the dehydration of short chain beta-hydroxyacyl-ACPs and long chain saturated and unsaturated beta-hydroxyacyl-ACPs. The chain is 3-hydroxyacyl-[acyl-carrier-protein] dehydratase FabZ from Prochlorococcus marinus (strain SARG / CCMP1375 / SS120).